The following is a 339-amino-acid chain: Phosphate acyltransferase (339 aa).

It belongs to the PlsX family. In terms of assembly, homodimer. Probably interacts with PlsY.

The protein resides in the cytoplasm. It carries out the reaction a fatty acyl-[ACP] + phosphate = an acyl phosphate + holo-[ACP]. The protein operates within lipid metabolism; phospholipid metabolism. Functionally, catalyzes the reversible formation of acyl-phosphate (acyl-PO(4)) from acyl-[acyl-carrier-protein] (acyl-ACP). This enzyme utilizes acyl-ACP as fatty acyl donor, but not acyl-CoA. In Moorella thermoacetica (strain ATCC 39073 / JCM 9320), this protein is Phosphate acyltransferase.